The chain runs to 374 residues: L-serine/homoserine O-acetyltransferase (374 aa).

In terms of domain architecture, AB hydrolase-1 spans alanine 46 to valine 357. Serine 149 acts as the Nucleophile in catalysis. Catalysis depends on residues aspartate 319 and histidine 352.

The protein belongs to the AB hydrolase superfamily. MetX family. In terms of assembly, homodimer.

It is found in the cytoplasm. It catalyses the reaction L-serine + acetyl-CoA = O-acetyl-L-serine + CoA. The enzyme catalyses L-homoserine + acetyl-CoA = O-acetyl-L-homoserine + CoA. It participates in antibiotic biosynthesis. In terms of biological role, involved in the biosynthesis of the antibiotic D-cycloserine (DCS), a cyclic structural analog of D-alanine, used as an antitubercular agent. Catalyzes the transfer of the acetyl group from acetyl-CoA to the hydroxyl group of L-serine to yield the activated serine, O-acetyl-L-serine. It prefers L-serine over L-homoserine. The sequence is that of L-serine/homoserine O-acetyltransferase from Streptomyces lavendulae.